The following is a 1051-amino-acid chain: Integrin alpha-3 (1051 aa).

The first 32 residues, 1-32 (MGPGPRCAPGDPGWMLGALALMVAASGRFAFA), serve as a signal peptide directing secretion. The Extracellular portion of the chain corresponds to 33–991 (FNLDTRFLVV…LVEELPAEIE (959 aa)). FG-GAP repeat units follow at residues 38–103 (RFLV…KDDC), 110–171 (EKSD…DLQL), 185–235 (CNSN…WDLS), 236–292 (EYSY…GGDL), 293–354 (KRKQ…TSFP), 356–411 (QPSL…GLLR), and 415–477 (QIVH…VARP). Asn-86 is a glycosylation site (N-linked (GlcNAc...) asparagine). Cystine bridges form between Cys-94–Cys-103, Cys-140–Cys-162, and Cys-185–Cys-197. The Ca(2+) site is built by Asp-315, Asn-317, Asp-319, Asp-323, Asp-378, Asn-380, Asp-382, Asp-386, Asp-439, Asp-441, Asn-443, Tyr-445, and Asp-447. 2 disulfides stabilise this stretch: Cys-485–Cys-490 and Cys-496–Cys-550. Asn-500, Asn-511, Asn-573, and Asn-605 each carry an N-linked (GlcNAc...) asparagine glycan. Cys-615 and Cys-621 are disulfide-bonded. Residues Asn-656, Asn-697, and Asn-841 are each glycosylated (N-linked (GlcNAc...) asparagine). Cysteines 694 and 702 form a disulfide. 2 cysteine pairs are disulfide-bonded: Cys-846–Cys-904 and Cys-911–Cys-916. The segment at 860-888 (LSDPGDKPHSPQRRRRQLDPGGDQGSPPV) is disordered. N-linked (GlcNAc...) asparagine glycans are attached at residues Asn-923, Asn-926, Asn-935, and Asn-969. The chain crosses the membrane as a helical span at residues 992-1019 (LWLVLVAVSAGLLLLGLIIILLWKCGFF). The GFFKR motif signature appears at 1017 to 1021 (GFFKR). Residues 1020-1051 (KRARTRALYEAKRQKAEMKSQPSETERLTDDY) lie on the Cytoplasmic side of the membrane.

It belongs to the integrin alpha chain family. As to quaternary structure, heterodimer of an alpha and a beta subunit. The alpha subunit is composed of a heavy and a light chain linked by a disulfide bond. Alpha-3 associates with beta-1. Interacts with HPS5. Interacts with FAP (seprase); the interaction occurs at the cell surface of invadopodia membrane in a collagen-dependent manner. In terms of processing, isoform 1, but not isoform 2, is phosphorylated on serine residues.

It localises to the cell membrane. Its subcellular location is the cell projection. The protein resides in the invadopodium membrane. The protein localises to the filopodium membrane. Integrin alpha-3/beta-1 is a receptor for fibronectin, laminin, collagen, epiligrin, thrombospondin and CSPG4. Integrin alpha-3/beta-1 provides a docking site for FAP (seprase) at invadopodia plasma membranes in a collagen-dependent manner and hence may participate in the adhesion, formation of invadopodia and matrix degradation processes, promoting cell invasion. Alpha-3/beta-1 may mediate with LGALS3 the stimulation by CSPG4 of endothelial cells migration. This chain is Integrin alpha-3 (ITGA3), found in Cricetulus griseus (Chinese hamster).